The following is a 122-amino-acid chain: Large ribosomal subunit protein uL14 (122 aa).

The protein belongs to the universal ribosomal protein uL14 family. Part of the 50S ribosomal subunit. Forms a cluster with proteins L3 and L19. In the 70S ribosome, L14 and L19 interact and together make contacts with the 16S rRNA in bridges B5 and B8.

Functionally, binds to 23S rRNA. Forms part of two intersubunit bridges in the 70S ribosome. The sequence is that of Large ribosomal subunit protein uL14 from Methylobacterium radiotolerans (strain ATCC 27329 / DSM 1819 / JCM 2831 / NBRC 15690 / NCIMB 10815 / 0-1).